The chain runs to 179 residues: NAD(P)H-quinone oxidoreductase subunit I, chloroplastic (179 aa).

2 consecutive 4Fe-4S ferredoxin-type domains span residues 55 to 84 and 95 to 124; these read GRIH…VDWR and LNYS…MTEE. Residues cysteine 64, cysteine 67, cysteine 70, cysteine 74, cysteine 104, cysteine 107, cysteine 110, and cysteine 114 each contribute to the [4Fe-4S] cluster site.

Belongs to the complex I 23 kDa subunit family. In terms of assembly, NDH is composed of at least 16 different subunits, 5 of which are encoded in the nucleus. The cofactor is [4Fe-4S] cluster.

The protein resides in the plastid. The protein localises to the chloroplast thylakoid membrane. The enzyme catalyses a plastoquinone + NADH + (n+1) H(+)(in) = a plastoquinol + NAD(+) + n H(+)(out). It catalyses the reaction a plastoquinone + NADPH + (n+1) H(+)(in) = a plastoquinol + NADP(+) + n H(+)(out). Its function is as follows. NDH shuttles electrons from NAD(P)H:plastoquinone, via FMN and iron-sulfur (Fe-S) centers, to quinones in the photosynthetic chain and possibly in a chloroplast respiratory chain. The immediate electron acceptor for the enzyme in this species is believed to be plastoquinone. Couples the redox reaction to proton translocation, and thus conserves the redox energy in a proton gradient. The chain is NAD(P)H-quinone oxidoreductase subunit I, chloroplastic from Nymphaea alba (White water-lily).